We begin with the raw amino-acid sequence, 125 residues long: Phosphoribosyl-AMP cyclohydrolase (125 aa).

D74 serves as a coordination point for Mg(2+). Residue C75 participates in Zn(2+) binding. Residues D76 and D78 each contribute to the Mg(2+) site. Zn(2+) is bound by residues C92 and C99.

Belongs to the PRA-CH family. Homodimer. Mg(2+) serves as cofactor. It depends on Zn(2+) as a cofactor.

It is found in the cytoplasm. The catalysed reaction is 1-(5-phospho-beta-D-ribosyl)-5'-AMP + H2O = 1-(5-phospho-beta-D-ribosyl)-5-[(5-phospho-beta-D-ribosylamino)methylideneamino]imidazole-4-carboxamide. It functions in the pathway amino-acid biosynthesis; L-histidine biosynthesis; L-histidine from 5-phospho-alpha-D-ribose 1-diphosphate: step 3/9. In terms of biological role, catalyzes the hydrolysis of the adenine ring of phosphoribosyl-AMP. This chain is Phosphoribosyl-AMP cyclohydrolase, found in Trichlorobacter lovleyi (strain ATCC BAA-1151 / DSM 17278 / SZ) (Geobacter lovleyi).